The following is a 64-amino-acid chain: Makatoxin-1 (64 aa).

In terms of domain architecture, LCN-type CS-alpha/beta spans 2-64 (RDAYIADSEN…VPIRISGSCR (63 aa)). Cystine bridges form between Cys12–Cys63, Cys16–Cys36, Cys22–Cys46, and Cys26–Cys48.

In terms of tissue distribution, expressed by the venom gland.

The protein localises to the secreted. In terms of biological role, this protein markedly relaxes the rat carbachol-precontracted anococcygeus muscle. This relaxation is inhibited by the inhibitor of nitric oxide (NO) synthase, N-nitro-L-arginine methyl ester (L-NAME), suggesting that the response induced by this protein is NO-mediated. In Olivierus martensii (Manchurian scorpion), this protein is Makatoxin-1.